A 139-amino-acid polypeptide reads, in one-letter code: uncharacterized protein (139 aa).

Residues 22–38 (SVMSVCFMTMSATVLPI) traverse the membrane as a helical segment.

Its subcellular location is the membrane. This is an uncharacterized protein from Saccharomyces cerevisiae (strain ATCC 204508 / S288c) (Baker's yeast).